A 396-amino-acid chain; its full sequence is Phosphoglycerate kinase (396 aa).

Residues 21 to 23, arginine 36, 59 to 62, arginine 118, and arginine 151 contribute to the substrate site; these read DLN and HFGR. Residues lysine 201, glutamate 323, and 353-356 contribute to the ATP site; that span reads GGDT.

This sequence belongs to the phosphoglycerate kinase family. Monomer.

The protein resides in the cytoplasm. It carries out the reaction (2R)-3-phosphoglycerate + ATP = (2R)-3-phospho-glyceroyl phosphate + ADP. Its pathway is carbohydrate degradation; glycolysis; pyruvate from D-glyceraldehyde 3-phosphate: step 2/5. This is Phosphoglycerate kinase from Brucella abortus biovar 1 (strain 9-941).